The chain runs to 456 residues: Probable serine/threonine-protein kinase DDB_G0277449 (456 aa).

Over residues 50-83 the composition is skewed to low complexity; it reads STSPTECEESSSSTITTPSEESLSSGEESSSISD. A disordered region spans residues 50-84; the sequence is STSPTECEESSSSTITTPSEESLSSGEESSSISDS. In terms of domain architecture, Protein kinase spans 128-383; sequence FIIKHLVGKG…AIEIKRHPFF (256 aa). ATP is bound by residues 134–142 and lysine 157; that span reads VGKGGFGKV. The active-site Proton acceptor is aspartate 251. Residues 384–455 form the AGC-kinase C-terminal domain; it reads KSIQWRKIEN…VRTPVLLESQ (72 aa).

This sequence belongs to the protein kinase superfamily. AGC Ser/Thr protein kinase family.

The enzyme catalyses L-seryl-[protein] + ATP = O-phospho-L-seryl-[protein] + ADP + H(+). It carries out the reaction L-threonyl-[protein] + ATP = O-phospho-L-threonyl-[protein] + ADP + H(+). This Dictyostelium discoideum (Social amoeba) protein is Probable serine/threonine-protein kinase DDB_G0277449.